The sequence spans 491 residues: Protein nucleotidyltransferase YdiU (491 aa).

The ATP site is built by Gly-94, Gly-96, Arg-97, Lys-117, Asp-129, Gly-130, Arg-180, and Arg-187. The Proton acceptor role is filled by Asp-256. The Mg(2+) site is built by Asn-257 and Asp-266. Asp-266 lines the ATP pocket.

It belongs to the SELO family. The cofactor is Mg(2+). It depends on Mn(2+) as a cofactor.

It carries out the reaction L-seryl-[protein] + ATP = 3-O-(5'-adenylyl)-L-seryl-[protein] + diphosphate. It catalyses the reaction L-threonyl-[protein] + ATP = 3-O-(5'-adenylyl)-L-threonyl-[protein] + diphosphate. The enzyme catalyses L-tyrosyl-[protein] + ATP = O-(5'-adenylyl)-L-tyrosyl-[protein] + diphosphate. The catalysed reaction is L-histidyl-[protein] + UTP = N(tele)-(5'-uridylyl)-L-histidyl-[protein] + diphosphate. It carries out the reaction L-seryl-[protein] + UTP = O-(5'-uridylyl)-L-seryl-[protein] + diphosphate. It catalyses the reaction L-tyrosyl-[protein] + UTP = O-(5'-uridylyl)-L-tyrosyl-[protein] + diphosphate. Nucleotidyltransferase involved in the post-translational modification of proteins. It can catalyze the addition of adenosine monophosphate (AMP) or uridine monophosphate (UMP) to a protein, resulting in modifications known as AMPylation and UMPylation. This chain is Protein nucleotidyltransferase YdiU, found in Clostridium botulinum (strain ATCC 19397 / Type A).